We begin with the raw amino-acid sequence, 122 residues long: Large ribosomal subunit protein uL14 (122 aa).

It belongs to the universal ribosomal protein uL14 family. Part of the 50S ribosomal subunit. Forms a cluster with proteins L3 and L19. In the 70S ribosome, L14 and L19 interact and together make contacts with the 16S rRNA in bridges B5 and B8.

Functionally, binds to 23S rRNA. Forms part of two intersubunit bridges in the 70S ribosome. In Solidesulfovibrio magneticus (strain ATCC 700980 / DSM 13731 / RS-1) (Desulfovibrio magneticus), this protein is Large ribosomal subunit protein uL14.